Here is a 1411-residue protein sequence, read N- to C-terminus: DNA-directed RNA polymerase subunit beta' (1411 aa).

Residues Cys-70, Cys-72, Cys-85, and Cys-88 each contribute to the Zn(2+) site. Mg(2+) contacts are provided by Asp-460, Asp-462, and Asp-464. Residues Cys-814, Cys-889, Cys-896, and Cys-899 each contribute to the Zn(2+) site. Polar residues predominate over residues Arg-1387–Ser-1399. A disordered region spans residues Arg-1387 to Phe-1411.

It belongs to the RNA polymerase beta' chain family. In terms of assembly, the RNAP catalytic core consists of 2 alpha, 1 beta, 1 beta' and 1 omega subunit. When a sigma factor is associated with the core the holoenzyme is formed, which can initiate transcription. Requires Mg(2+) as cofactor. The cofactor is Zn(2+).

It catalyses the reaction RNA(n) + a ribonucleoside 5'-triphosphate = RNA(n+1) + diphosphate. In terms of biological role, DNA-dependent RNA polymerase catalyzes the transcription of DNA into RNA using the four ribonucleoside triphosphates as substrates. The chain is DNA-directed RNA polymerase subunit beta' from Xylella fastidiosa (strain M12).